Reading from the N-terminus, the 86-residue chain is Neurotoxin LmNaTx1 (86 aa).

Residues 1-18 (MKILIIFVIAITVVGVQS) form the signal peptide. The region spanning 19–85 (KDGYPIYSTG…VWTYAENTCG (67 aa)) is the LCN-type CS-alpha/beta domain. Intrachain disulfides connect Cys33–Cys84, Cys37–Cys58, Cys44–Cys65, and Cys48–Cys67. Cys84 carries the cysteine amide modification.

This sequence belongs to the long (4 C-C) scorpion toxin superfamily. Sodium channel inhibitor family. Beta subfamily. In terms of tissue distribution, expressed by the venom gland.

The protein localises to the secreted. Functionally, binds voltage-independently at site-4 of sodium channels (Nav) and shift the voltage of activation toward more negative potentials thereby affecting sodium channel activation and promoting spontaneous and repetitive firing. The chain is Neurotoxin LmNaTx1 from Lychas mucronatus (Chinese swimming scorpion).